The sequence spans 756 residues: 5-methyltetrahydropteroyltriglutamate--homocysteine methyltransferase (756 aa).

Residues 16 to 19 (RELK) and K112 contribute to the 5-methyltetrahydropteroyltri-L-glutamate site. L-homocysteine contacts are provided by residues 432–434 (IGS) and E485. Residues 432–434 (IGS) and E485 each bind L-methionine. 5-methyltetrahydropteroyltri-L-glutamate is bound by residues 516-517 (RC) and W562. D600 contributes to the L-homocysteine binding site. Residue D600 participates in L-methionine binding. Residue E606 participates in 5-methyltetrahydropteroyltri-L-glutamate binding. Zn(2+) contacts are provided by H642, C644, and E666. The active-site Proton donor is H695. C727 contacts Zn(2+).

Belongs to the vitamin-B12 independent methionine synthase family. Zn(2+) is required as a cofactor.

It catalyses the reaction 5-methyltetrahydropteroyltri-L-glutamate + L-homocysteine = tetrahydropteroyltri-L-glutamate + L-methionine. Its pathway is amino-acid biosynthesis; L-methionine biosynthesis via de novo pathway; L-methionine from L-homocysteine (MetE route): step 1/1. Its function is as follows. Catalyzes the transfer of a methyl group from 5-methyltetrahydrofolate to homocysteine resulting in methionine formation. This chain is 5-methyltetrahydropteroyltriglutamate--homocysteine methyltransferase, found in Haemophilus influenzae (strain PittEE).